We begin with the raw amino-acid sequence, 197 residues long: Glycerol-3-phosphate acyltransferase (197 aa).

The next 6 helical transmembrane spans lie at 1–21, 50–70, 77–97, 111–131, 136–156, and 157–177; these read MNIL…GFLI, WPAL…VKIA, GLIE…PIWL, MFLA…LIVL, FVSL…FFYL, and GNYM…VIWK.

This sequence belongs to the PlsY family. As to quaternary structure, probably interacts with PlsX.

It localises to the cell inner membrane. The catalysed reaction is an acyl phosphate + sn-glycerol 3-phosphate = a 1-acyl-sn-glycero-3-phosphate + phosphate. It functions in the pathway lipid metabolism; phospholipid metabolism. Functionally, catalyzes the transfer of an acyl group from acyl-phosphate (acyl-PO(4)) to glycerol-3-phosphate (G3P) to form lysophosphatidic acid (LPA). This enzyme utilizes acyl-phosphate as fatty acyl donor, but not acyl-CoA or acyl-ACP. The protein is Glycerol-3-phosphate acyltransferase of Prochlorococcus marinus (strain MIT 9312).